Reading from the N-terminus, the 505-residue chain is Prenylcysteine oxidase 1 (505 aa).

Positions 1-27 (MGRVVAELVSSLLGLWLLLCSCGCPEG) are cleaved as a signal peptide. Residues Asn196, Asn323, and Asn353 are each glycosylated (N-linked (GlcNAc...) asparagine).

Belongs to the prenylcysteine oxidase family. FAD is required as a cofactor.

The protein localises to the lysosome. The enzyme catalyses an S-polyprenyl-L-cysteine + O2 + H2O = a polyprenal + L-cysteine + H2O2. It carries out the reaction S-(2E,6E)-farnesyl-L-cysteine + O2 + H2O = (2E,6E)-farnesal + L-cysteine + H2O2. It catalyses the reaction [(2E,6E,10E)-geranylgeranyl]-L-cysteine + O2 + H2O = (2E,6E,10E)-geranylgeranial + L-cysteine + H2O2. Its function is as follows. Prenylcysteine oxidase that cleaves the thioether bond of prenyl-L-cysteines, such as farnesylcysteine and geranylgeranylcysteine. Only active against free prenylcysteines and not prenylcysteine residues within prenylated proteins or peptides. Involved in the final step in the degradation of prenylated proteins, by degrading prenylcysteines after the protein has been degraded. The sequence is that of Prenylcysteine oxidase 1 from Pongo abelii (Sumatran orangutan).